We begin with the raw amino-acid sequence, 453 residues long: UDP-N-acetylmuramoylalanine--D-glutamate ligase (453 aa).

Residue 117-123 (GSNGKST) participates in ATP binding.

This sequence belongs to the MurCDEF family.

It is found in the cytoplasm. It carries out the reaction UDP-N-acetyl-alpha-D-muramoyl-L-alanine + D-glutamate + ATP = UDP-N-acetyl-alpha-D-muramoyl-L-alanyl-D-glutamate + ADP + phosphate + H(+). It participates in cell wall biogenesis; peptidoglycan biosynthesis. Cell wall formation. Catalyzes the addition of glutamate to the nucleotide precursor UDP-N-acetylmuramoyl-L-alanine (UMA). The sequence is that of UDP-N-acetylmuramoylalanine--D-glutamate ligase from Chromobacterium violaceum (strain ATCC 12472 / DSM 30191 / JCM 1249 / CCUG 213 / NBRC 12614 / NCIMB 9131 / NCTC 9757 / MK).